Here is a 354-residue protein sequence, read N- to C-terminus: Ribosomal RNA large subunit methyltransferase M (354 aa).

S-adenosyl-L-methionine is bound by residues serine 183, serine 216–glycine 219, aspartate 235, aspartate 255, and aspartate 271. The Proton acceptor role is filled by lysine 300.

Belongs to the class I-like SAM-binding methyltransferase superfamily. RNA methyltransferase RlmE family. RlmM subfamily. In terms of assembly, monomer.

It localises to the cytoplasm. It carries out the reaction cytidine(2498) in 23S rRNA + S-adenosyl-L-methionine = 2'-O-methylcytidine(2498) in 23S rRNA + S-adenosyl-L-homocysteine + H(+). Functionally, catalyzes the 2'-O-methylation at nucleotide C2498 in 23S rRNA. The chain is Ribosomal RNA large subunit methyltransferase M from Pseudomonas putida (strain GB-1).